The chain runs to 221 residues: Adenylate kinase (221 aa).

Residue 10–15 (GAGKGT) coordinates ATP. Residues 30 to 59 (STGDMLRAAVKAGTPLGVEAKKVMDAGGLV) form an NMP region. AMP-binding positions include T31, R36, 57-59 (GLV), 85-88 (GFPR), and Q92. The segment at 122-159 (GRRVHVASGRTYHVKYNPPKTEGVDDETGEALIQRDDD) is LID. ATP contacts are provided by residues R123 and 132–133 (TY). Residues R156 and R167 each contribute to the AMP site. G207 contributes to the ATP binding site.

The protein belongs to the adenylate kinase family. Monomer.

Its subcellular location is the cytoplasm. It carries out the reaction AMP + ATP = 2 ADP. Its pathway is purine metabolism; AMP biosynthesis via salvage pathway; AMP from ADP: step 1/1. Catalyzes the reversible transfer of the terminal phosphate group between ATP and AMP. Plays an important role in cellular energy homeostasis and in adenine nucleotide metabolism. The sequence is that of Adenylate kinase from Cupriavidus necator (strain ATCC 17699 / DSM 428 / KCTC 22496 / NCIMB 10442 / H16 / Stanier 337) (Ralstonia eutropha).